The sequence spans 261 residues: Cytochrome c oxidase subunit 3 (261 aa).

The Mitochondrial matrix portion of the chain corresponds to 1 to 15; sequence MTHQTHAYHMVNPSP. A helical membrane pass occupies residues 16–34; that stretch reads WPLTGALSALLMTSGLIMW. At 35–40 the chain is on the mitochondrial intermembrane side; sequence FHFNST. The chain crosses the membrane as a helical span at residues 41–66; that stretch reads ALLTLGLTTNMLTMYQWWRDVIREST. Topologically, residues 67 to 72 are mitochondrial matrix; the sequence is FQGHHT. A helical membrane pass occupies residues 73 to 105; the sequence is PAVQKGLRYGMILFIISEVLFFTGFFWAFYHSS. The Mitochondrial intermembrane segment spans residues 106–128; sequence LAPTPELGGCWPPTGIHPLNPLE. The helical transmembrane segment at 129 to 152 threads the bilayer; it reads VPLLNTSVLLASGVSITWAHHSLM. Topologically, residues 153-155 are mitochondrial matrix; it reads EGN. Residues 156–183 form a helical membrane-spanning segment; the sequence is RYHMLQALFITIALGVYFTLLQASEYYE. Over 184–190 the chain is Mitochondrial intermembrane; that stretch reads APFTISD. Residues 191–223 form a helical membrane-spanning segment; sequence GVYGSTFFVATGFHGLHVIIGSTFLIVCFFRQL. Residues 224–232 are Mitochondrial matrix-facing; it reads KFHFTSSHH. A helical membrane pass occupies residues 233-256; the sequence is FGFEAAAWYWHFVDVVWLFLYMSI. Residues 257–261 lie on the Mitochondrial intermembrane side of the membrane; that stretch reads YWWGS.

The protein belongs to the cytochrome c oxidase subunit 3 family. In terms of assembly, component of the cytochrome c oxidase (complex IV, CIV), a multisubunit enzyme composed of 14 subunits. The complex is composed of a catalytic core of 3 subunits MT-CO1, MT-CO2 and MT-CO3, encoded in the mitochondrial DNA, and 11 supernumerary subunits COX4I, COX5A, COX5B, COX6A, COX6B, COX6C, COX7A, COX7B, COX7C, COX8 and NDUFA4, which are encoded in the nuclear genome. The complex exists as a monomer or a dimer and forms supercomplexes (SCs) in the inner mitochondrial membrane with NADH-ubiquinone oxidoreductase (complex I, CI) and ubiquinol-cytochrome c oxidoreductase (cytochrome b-c1 complex, complex III, CIII), resulting in different assemblies (supercomplex SCI(1)III(2)IV(1) and megacomplex MCI(2)III(2)IV(2)).

It is found in the mitochondrion inner membrane. It carries out the reaction 4 Fe(II)-[cytochrome c] + O2 + 8 H(+)(in) = 4 Fe(III)-[cytochrome c] + 2 H2O + 4 H(+)(out). Component of the cytochrome c oxidase, the last enzyme in the mitochondrial electron transport chain which drives oxidative phosphorylation. The respiratory chain contains 3 multisubunit complexes succinate dehydrogenase (complex II, CII), ubiquinol-cytochrome c oxidoreductase (cytochrome b-c1 complex, complex III, CIII) and cytochrome c oxidase (complex IV, CIV), that cooperate to transfer electrons derived from NADH and succinate to molecular oxygen, creating an electrochemical gradient over the inner membrane that drives transmembrane transport and the ATP synthase. Cytochrome c oxidase is the component of the respiratory chain that catalyzes the reduction of oxygen to water. Electrons originating from reduced cytochrome c in the intermembrane space (IMS) are transferred via the dinuclear copper A center (CU(A)) of subunit 2 and heme A of subunit 1 to the active site in subunit 1, a binuclear center (BNC) formed by heme A3 and copper B (CU(B)). The BNC reduces molecular oxygen to 2 water molecules using 4 electrons from cytochrome c in the IMS and 4 protons from the mitochondrial matrix. This chain is Cytochrome c oxidase subunit 3 (MT-CO3), found in Ovis aries (Sheep).